Reading from the N-terminus, the 217-residue chain is PTB-containing, cubilin and LRP1-interacting protein (217 aa).

A PID domain is found at Val-60 to Gly-217. The segment at Lys-194–Gly-217 is disordered. 3 positions are modified to phosphoserine: Ser-202, Ser-203, and Ser-214. Positions Ala-208–Gly-217 are enriched in acidic residues.

In terms of assembly, found in a complex with PID1/PCLI1, LRP1 and CUBNI. Interacts with LRP1 and CUBN.

It is found in the cytoplasm. Its function is as follows. Increases proliferation of preadipocytes without affecting adipocytic differentiation. The sequence is that of PTB-containing, cubilin and LRP1-interacting protein (Pid1) from Mus musculus (Mouse).